A 1416-amino-acid polypeptide reads, in one-letter code: Telomere-associated protein RIF1 (1416 aa).

4 disordered regions span residues 789-858 (PIRK…PVVQ), 886-984 (PEVA…HLTG), 1021-1054 (ARAQDRAEQVSTPTSELNELTGTDHTSTPIQAPP), and 1166-1186 (TARTATTDKSLDKSTGEAPEE). Over residues 928–945 (GSSGDPAASAGAVAAGEM) the composition is skewed to low complexity. Positions 1029 to 1050 (QVSTPTSELNELTGTDHTSTPI) are enriched in polar residues.

This sequence belongs to the RIF1 family. Highly divergent. Interacts with Pp1-87b. Interacts with SuUR (via SNF2-like region). Post-translationally, phosphorylated, probably by Cdk1; phosphorylation regulates dissociation from heterochromatin. In terms of tissue distribution, expressed in nurse cells and follicle cells in the adult female (at protein level). Detected in adult at extremely low levels.

The protein resides in the nucleus. It localises to the chromosome. The protein localises to the telomere. Regulates the timing of initiation of DNA replication. Functions in copy number control by promoting the underreplication of DNA, which is found in many late replicating euchromatic regions of salivary gland polytene chromosomes. Promotes underreplication by localizing to active DNA replication forks in a partially SuUR-dependent manner, and inhibiting replication fork progression. Might also work as an adapter to recruit Pp1-87B to multiple sites on the chromosome and may function with Pp1-87B to mediate underreplication. Plays an essential role in embryonic development, in the transition from larvae to pupae and, probably, in proliferating tissues later on. In embryos, during mid-blastula transition, binds to and selectively delays the replication of large blocks of repetitive DNA satellite sequences during S phase in response to the activity of Cdk1; maternal Rif1 is specifically required for the normal extension of S phase 14. Unlike mammalian orthologs, does not appear to play a role in DNA damage repair. The chain is Telomere-associated protein RIF1 from Drosophila melanogaster (Fruit fly).